Reading from the N-terminus, the 317-residue chain is MTPNKPTLHPRNRHQGRYDFPSLIKAHPDLARFTITNPHGKPSIDFANPEAVRVFNRALLKAQYGIQHWDIPADYLCPPIPGRADYIHVAADLLADDNAGDVPRGTQVRALDVGVGANCIYPLLGHSDYRWRFLGSDIDPVALASAKAIVQANGLGKAITLRQQANRAHILSGLLQEGERFDLTLCNPPFHASRDEATRGSQRKWKNLGKQDPKRKLPVLNFGGQNNELWCEGGEIRFVTQLIGESVQYAERVLWFTSLVSKASNLPGIEAALKKSGAKAVRIIEMGQGQKQSRMVAWSFHDDAARQAWHAQRKSQA.

This sequence belongs to the methyltransferase superfamily. METTL16/RlmF family.

The protein resides in the cytoplasm. The catalysed reaction is adenosine(1618) in 23S rRNA + S-adenosyl-L-methionine = N(6)-methyladenosine(1618) in 23S rRNA + S-adenosyl-L-homocysteine + H(+). In terms of biological role, specifically methylates the adenine in position 1618 of 23S rRNA. This Pseudomonas putida (strain ATCC 700007 / DSM 6899 / JCM 31910 / BCRC 17059 / LMG 24140 / F1) protein is Ribosomal RNA large subunit methyltransferase F.